Here is a 476-residue protein sequence, read N- to C-terminus: Glycogen synthase (476 aa).

Residue Lys15 coordinates ADP-alpha-D-glucose.

It belongs to the glycosyltransferase 1 family. Bacterial/plant glycogen synthase subfamily.

It catalyses the reaction [(1-&gt;4)-alpha-D-glucosyl](n) + ADP-alpha-D-glucose = [(1-&gt;4)-alpha-D-glucosyl](n+1) + ADP + H(+). The protein operates within glycan biosynthesis; glycogen biosynthesis. Synthesizes alpha-1,4-glucan chains using ADP-glucose. In Marinomonas sp. (strain MWYL1), this protein is Glycogen synthase.